A 747-amino-acid chain; its full sequence is ESX-1 secretion system protein EccCa1 (747 aa).

3 helical membrane-spanning segments follow: residues 41 to 61 (ILPY…VAGG), 65 to 85 (LSPY…GGLA), and 222 to 242 (FPTI…TAMI). In terms of domain architecture, FtsK spans 456–665 (GNVMYLDIKE…LRTTSSHESK (210 aa)). An ATP-binding site is contributed by 479-486 (GTTGSGKS).

In terms of assembly, part of the ESX-1 / type VII secretion system (T7SS), which is composed of cytosolic and membrane components. The ESX-1 membrane complex is composed of EccB1, EccCa1, EccCb1, EccD1 and EccE1.

The protein resides in the cell inner membrane. In terms of biological role, part of the ESX-1 specialized secretion system, which delivers several virulence factors to host cells during infection, including the key virulence factors EsxA (ESAT-6) and EsxB (CFP-10). The protein is ESX-1 secretion system protein EccCa1 of Mycobacterium tuberculosis (strain CDC 1551 / Oshkosh).